Here is a 226-residue protein sequence, read N- to C-terminus: Large ribosomal subunit protein uL1 (226 aa).

Belongs to the universal ribosomal protein uL1 family. Part of the 50S ribosomal subunit.

In terms of biological role, binds directly to 23S rRNA. The L1 stalk is quite mobile in the ribosome, and is involved in E site tRNA release. Its function is as follows. Protein L1 is also a translational repressor protein, it controls the translation of the L11 operon by binding to its mRNA. The chain is Large ribosomal subunit protein uL1 from Mycoplasma mycoides subsp. mycoides SC (strain CCUG 32753 / NCTC 10114 / PG1).